A 587-amino-acid polypeptide reads, in one-letter code: 5-aminolevulinate synthase, erythroid-specific, mitochondrial (587 aa).

The N-terminal 49 residues, 1-49 (MVAAAMLLRSCPVLSKGPTGLLGKVAKTYQFLFGIGRCPILATQGPTCS), are a transit peptide targeting the mitochondrion. Arg163 contacts succinyl-CoA. 2 residues coordinate pyridoxal 5'-phosphate: Cys258 and Phe259. Residues Ser280 and Lys299 each contribute to the succinyl-CoA site. Pyridoxal 5'-phosphate is bound by residues Ser332, His360, and Thr388. The active site involves Lys391. Lys391 carries the post-translational modification N6-(pyridoxal phosphate)lysine. Positions 420 and 421 each coordinate pyridoxal 5'-phosphate. Residue Thr508 participates in succinyl-CoA binding.

This sequence belongs to the class-II pyridoxal-phosphate-dependent aminotransferase family. Homodimer. Interacts with SUCLA2. Pyridoxal 5'-phosphate is required as a cofactor. In terms of tissue distribution, erythroid-specific.

The protein localises to the mitochondrion inner membrane. It carries out the reaction succinyl-CoA + glycine + H(+) = 5-aminolevulinate + CO2 + CoA. It functions in the pathway porphyrin-containing compound metabolism; protoporphyrin-IX biosynthesis; 5-aminolevulinate from glycine: step 1/1. Its function is as follows. Catalyzes the pyridoxal 5'-phosphate (PLP)-dependent condensation of succinyl-CoA and glycine to form aminolevulinic acid (ALA), with CoA and CO2 as by-products. Contributes significantly to heme formation during erythropoiesis. The protein is 5-aminolevulinate synthase, erythroid-specific, mitochondrial (Alas2) of Rattus norvegicus (Rat).